The chain runs to 289 residues: Rhomboid-type serine protease 2 (289 aa).

6 helical membrane passes run 26 to 46 (VVIIAIVGFWLAGLQSIVDIQ), 67 to 87 (FPFIHLNIFHAVMNILALTPL), 100 to 120 (CLALFFGPLTTIPAFLYIGLE), 122 to 142 (FVFGNNVAVMGASMWVFLLLG), 157 to 179 (IGTYSIPTWTTPIGVLFAMAVLV), and 184 to 203 (FWGHAAGLVIGYGGMFSSTL). Catalysis depends on S134, which acts as the Nucleophile. Residue H187 is part of the active site.

It belongs to the peptidase S54 family.

Its subcellular location is the golgi apparatus membrane. The protein resides in the golgi apparatus. It localises to the cis-Golgi network membrane. The catalysed reaction is Cleaves type-1 transmembrane domains using a catalytic dyad composed of serine and histidine that are contributed by different transmembrane domains.. Functionally, probable rhomboid-type serine protease that catalyzes intramembrane proteolysis. The chain is Rhomboid-type serine protease 2 (RBD2) from Podospora anserina (Pleurage anserina).